Reading from the N-terminus, the 293-residue chain is 4-hydroxy-tetrahydrodipicolinate synthase (293 aa).

Position 45 (T45) interacts with pyruvate. Y133 acts as the Proton donor/acceptor in catalysis. The Schiff-base intermediate with substrate role is filled by K162. Position 204 (I204) interacts with pyruvate.

Belongs to the DapA family. As to quaternary structure, homotetramer; dimer of dimers.

The protein localises to the cytoplasm. The catalysed reaction is L-aspartate 4-semialdehyde + pyruvate = (2S,4S)-4-hydroxy-2,3,4,5-tetrahydrodipicolinate + H2O + H(+). It functions in the pathway amino-acid biosynthesis; L-lysine biosynthesis via DAP pathway; (S)-tetrahydrodipicolinate from L-aspartate: step 3/4. In terms of biological role, catalyzes the condensation of (S)-aspartate-beta-semialdehyde [(S)-ASA] and pyruvate to 4-hydroxy-tetrahydrodipicolinate (HTPA). The protein is 4-hydroxy-tetrahydrodipicolinate synthase of Brucella abortus biovar 1 (strain 9-941).